Reading from the N-terminus, the 240-residue chain is MQIFPAIDLKNGQCVRLFQGDFSKKTVVNEDPIAQAKGFATDGATYLHIVDLDGALEGRPINLEVIQKMKTTAKIPVQVGGGIRSMAQVDYYLESGIDRVIIGSAALTDPDFLRAAVQKYGAKIAAGIDAKNGLVATRGWLDVSQVNYLDLAKRMEKVGVETIIYTDISRDGTLTGPNLEQMANLKEHVKVNLIASGGVSSRADLEALAKLGLYGAIAGKALYNRQISMSDIVEVEQIAY.

The active-site Proton acceptor is the aspartate 8. Aspartate 129 functions as the Proton donor in the catalytic mechanism.

The protein belongs to the HisA/HisF family.

The protein resides in the cytoplasm. The catalysed reaction is 1-(5-phospho-beta-D-ribosyl)-5-[(5-phospho-beta-D-ribosylamino)methylideneamino]imidazole-4-carboxamide = 5-[(5-phospho-1-deoxy-D-ribulos-1-ylimino)methylamino]-1-(5-phospho-beta-D-ribosyl)imidazole-4-carboxamide. It functions in the pathway amino-acid biosynthesis; L-histidine biosynthesis; L-histidine from 5-phospho-alpha-D-ribose 1-diphosphate: step 4/9. The protein is 1-(5-phosphoribosyl)-5-[(5-phosphoribosylamino)methylideneamino] imidazole-4-carboxamide isomerase of Listeria monocytogenes serotype 4a (strain HCC23).